The following is a 360-amino-acid chain: GTPase Obg (360 aa).

The Obg domain maps to 1-156 (MFVDSVEIII…KCVRLELKLI (156 aa)). The region spanning 157 to 360 (ADIGLVGFPN…LKFVLLEALP (204 aa)) is the OBG-type G domain. GTP-binding positions include 163–170 (GFPNAGKS), 188–192 (FTTLV), 210–213 (DIPG), 279–282 (NKCD), and 341–343 (SAV). Ser-170 and Thr-190 together coordinate Mg(2+).

It belongs to the TRAFAC class OBG-HflX-like GTPase superfamily. OBG GTPase family. In terms of assembly, monomer. The cofactor is Mg(2+).

The protein resides in the cytoplasm. An essential GTPase which binds GTP, GDP and possibly (p)ppGpp with moderate affinity, with high nucleotide exchange rates and a fairly low GTP hydrolysis rate. Plays a role in control of the cell cycle, stress response, ribosome biogenesis and in those bacteria that undergo differentiation, in morphogenesis control. The polypeptide is GTPase Obg (Helicobacter acinonychis (strain Sheeba)).